A 64-amino-acid chain; its full sequence is DNA gyrase inhibitor YacG (64 aa).

Residues Cys10, Cys13, Cys29, and Cys33 each contribute to the Zn(2+) site.

Belongs to the DNA gyrase inhibitor YacG family. In terms of assembly, interacts with GyrB. The cofactor is Zn(2+).

Inhibits all the catalytic activities of DNA gyrase by preventing its interaction with DNA. Acts by binding directly to the C-terminal domain of GyrB, which probably disrupts DNA binding by the gyrase. This is DNA gyrase inhibitor YacG from Pectobacterium carotovorum subsp. carotovorum (strain PC1).